Here is a 385-residue protein sequence, read N- to C-terminus: Calcium/calmodulin-dependent protein kinase type 1D (385 aa).

Positions 23-279 constitute a Protein kinase domain; it reads FEFKETLGTG…CEQAARHPWI (257 aa). ATP contacts are provided by residues 29–37 and Lys-52; that span reads LGTGAFSEV. A Glycyl lysine isopeptide (Lys-Gly) (interchain with G-Cter in SUMO2) cross-link involves residue Lys-113. Ser-122 bears the Phosphoserine mark. The active-site Proton acceptor is Asp-144. Thr-180 carries the phosphothreonine; by CaMKK1 and CaMKK2 modification. Residues 279–319 form an autoinhibitory domain region; it reads IAGDTALNKNIHESVSAQIRKNFAKSKWRQAFNATAVVRHM. The interval 299-320 is calmodulin-binding; the sequence is KNFAKSKWRQAFNATAVVRHMR. A Nuclear export signal motif is present at residues 318–324; the sequence is HMRKLHL. The segment at 360 to 385 is disordered; that stretch reads SSGVSGVGAERRPRPTTVTAVHSGSK. A compositionally biased stretch (polar residues) spans 375-385; the sequence is TTVTAVHSGSK.

Belongs to the protein kinase superfamily. CAMK Ser/Thr protein kinase family. CaMK subfamily. In terms of tissue distribution, widely expressed. Highly and mostly expressed in polymorphonuclear leukocytes (neutrophilic and eosinophilic granulocytes) while little or no expression is observed in monocytes and lymphocytes.

Its subcellular location is the cytoplasm. It localises to the nucleus. The enzyme catalyses L-seryl-[protein] + ATP = O-phospho-L-seryl-[protein] + ADP + H(+). It catalyses the reaction L-threonyl-[protein] + ATP = O-phospho-L-threonyl-[protein] + ADP + H(+). Its activity is regulated as follows. Activated by Ca(2+)/calmodulin. Binding of calmodulin results in conformational change that relieves intrasteric autoinhibition and allows phosphorylation of Thr-180 within the activation loop by CaMKK1 or CaMKK2. Phosphorylation of Thr-180 results in several fold increase in total activity. Unlike CaMK4, may be unable to exhibit autonomous activity after Ca(2+)/calmodulin activation. Calcium/calmodulin-dependent protein kinase that operates in the calcium-triggered CaMKK-CaMK1 signaling cascade and, upon calcium influx, activates CREB-dependent gene transcription, regulates calcium-mediated granulocyte function and respiratory burst and promotes basal dendritic growth of hippocampal neurons. In neutrophil cells, required for cytokine-induced proliferative responses and activation of the respiratory burst. Activates the transcription factor CREB1 in hippocampal neuron nuclei. May play a role in apoptosis of erythroleukemia cells. In vitro, phosphorylates transcription factor CREM isoform Beta. This is Calcium/calmodulin-dependent protein kinase type 1D (CAMK1D) from Homo sapiens (Human).